Here is a 938-residue protein sequence, read N- to C-terminus: Isoleucine--tRNA ligase (938 aa).

The 'HIGH' region signature appears at 58–68 (PYANGSIHIGH). At Lys-183 the chain carries N6-acetyllysine. Glu-561 contacts L-isoleucyl-5'-AMP. The 'KMSKS' region signature appears at 602–606 (KMSKS). Lys-605 is an ATP binding site. Zn(2+)-binding residues include Cys-901, Cys-904, Cys-921, and Cys-924.

This sequence belongs to the class-I aminoacyl-tRNA synthetase family. IleS type 1 subfamily. In terms of assembly, monomer. The cofactor is Zn(2+).

It localises to the cytoplasm. The enzyme catalyses tRNA(Ile) + L-isoleucine + ATP = L-isoleucyl-tRNA(Ile) + AMP + diphosphate. Its function is as follows. Catalyzes the attachment of isoleucine to tRNA(Ile). As IleRS can inadvertently accommodate and process structurally similar amino acids such as valine, to avoid such errors it has two additional distinct tRNA(Ile)-dependent editing activities. One activity is designated as 'pretransfer' editing and involves the hydrolysis of activated Val-AMP. The other activity is designated 'posttransfer' editing and involves deacylation of mischarged Val-tRNA(Ile). The sequence is that of Isoleucine--tRNA ligase from Shigella boydii serotype 4 (strain Sb227).